The sequence spans 193 residues: MGRHSTKTSSAFTKLAASTIAFGAAATIMAPSASAAPDSDWDRLAQCESGGNWAINTGNGYHGGLQFSASTWAAYGGQEFATYAYQATREQQIAVAERTLAGQGWGAWPACSASLGLNSAPTQRDLSATTSTPEPAAAAPAVAEYNAPAANIAVGSTDLNTIKSTYGAVTGTLAQYGITVPAEVESYYNAFVG.

An N-terminal signal peptide occupies residues 1–35 (MGRHSTKTSSAFTKLAASTIAFGAAATIMAPSASA).

This sequence belongs to the transglycosylase family. Rpf subfamily.

The protein localises to the secreted. In terms of biological role, factor that stimulates resuscitation of dormant cells. Has peptidoglycan (PG) hydrolytic activity. Active in the pM concentration range. Has little to no effect on actively-growing cells. PG fragments could either directly activate the resuscitation pathway of dormant bacteria or serve as a substrate for endogenous Rpf, resulting in low molecular weight products with resuscitation activity. This is Resuscitation-promoting factor Rpf1 (rpf1) from Corynebacterium glutamicum (strain ATCC 13032 / DSM 20300 / JCM 1318 / BCRC 11384 / CCUG 27702 / LMG 3730 / NBRC 12168 / NCIMB 10025 / NRRL B-2784 / 534).